The following is a 256-amino-acid chain: Phosphate import ATP-binding protein PstB (256 aa).

One can recognise an ABC transporter domain in the interval 10–251; it reads IRTVNVNFYY…PEQKQTEDYI (242 aa). ATP is bound at residue 42 to 49; it reads GPSGCGKS.

This sequence belongs to the ABC transporter superfamily. Phosphate importer (TC 3.A.1.7) family. The complex is composed of two ATP-binding proteins (PstB), two transmembrane proteins (PstC and PstA) and a solute-binding protein (PstS).

The protein resides in the cell inner membrane. The catalysed reaction is phosphate(out) + ATP + H2O = ADP + 2 phosphate(in) + H(+). Part of the ABC transporter complex PstSACB involved in phosphate import. Responsible for energy coupling to the transport system. This Syntrophus aciditrophicus (strain SB) protein is Phosphate import ATP-binding protein PstB.